The following is a 196-amino-acid chain: uncharacterized protein (196 aa).

Residues 122-135 (SEIEKKQEPIERKT) show a composition bias toward basic and acidic residues. A disordered region spans residues 122 to 150 (SEIEKKQEPIERKTSTTTNTESNQEKPLR).

This is an uncharacterized protein from Leptospira interrogans.